Here is a 112-residue protein sequence, read N- to C-terminus: Conotoxin vil14.5 (112 aa).

The first 22 residues, 1–22 (MGFRVLVLVVMATTSALPFTFS), serve as a signal peptide directing secretion. Residues 23–85 (EEPGRSPFRP…FAELSVGQRR (63 aa)) constitute a propeptide that is removed on maturation. Positions 53 to 74 (RADGQPPDMRQPEMRRPEVRQP) are disordered. Residues 62-74 (RQPEMRRPEVRQP) are compositionally biased toward basic and acidic residues. Cystine bridges form between cysteine 91-cysteine 111 and cysteine 95-cysteine 107.

The protein belongs to the conotoxin R superfamily. As to expression, expressed by the venom duct.

The protein localises to the secreted. The protein is Conotoxin vil14.5 of Conus villepinii (Villepin's cone).